A 632-amino-acid polypeptide reads, in one-letter code: Probable extracellular metalloproteinase 2 (632 aa).

Positions 1–19 (MHGLLLAGLAAALPLGVAG) are cleaved as a signal peptide. A propeptide spanning residues 20-244 (LPARQQSGLS…VHNVVDYVAS (225 aa)) is cleaved from the precursor. N-linked (GlcNAc...) asparagine glycosylation is found at asparagine 81 and asparagine 270. Histidine 429 is a binding site for Zn(2+). Glutamate 430 is an active-site residue. Histidine 433 is a Zn(2+) binding site.

It belongs to the peptidase M36 family. Requires Zn(2+) as cofactor.

It is found in the secreted. In terms of biological role, secreted metalloproteinase probably acting as a virulence factor. The chain is Probable extracellular metalloproteinase 2 (MEP2) from Arthroderma benhamiae (strain ATCC MYA-4681 / CBS 112371) (Trichophyton mentagrophytes).